An 859-amino-acid chain; its full sequence is Envelope glycoprotein (859 aa).

A propeptide spanning residues 1-6 (MVSIAF) is cleaved from the precursor. At 7-614 (YGGIPGGIST…KDLWSHIGNW (608 aa)) the chain is on the extracellular side. Residues Asn40, Asn112, Asn141, Asn148, Asn186, Asn214, Asn233, Asn244, Asn340, Asn368, Asn399, Asn406, Asn411, and Asn422 are each glycosylated (N-linked (GlcNAc...) asparagine; by host). Residues 446–466 (FGISAIVAAIVAATAIAASAT) form a fusion peptide region. 2 N-linked (GlcNAc...) asparagine; by host glycosylation sites follow: Asn483 and Asn490. The immunosuppression stretch occupies residues 498–513 (LIERQIKILYAMILQT). N-linked (GlcNAc...) asparagine; by host glycosylation is found at Asn550 and Asn557. Coiled-coil stretches lie at residues 576–624 (ILTT…SIIK) and 663–699 (KKFH…YYKQ). A helical transmembrane segment spans residues 615-635 (IPGLGASIIKYIVMFLLIYLL). Over 636 to 859 (LTSSPKILRA…TSHVSMPQYV (224 aa)) the chain is Cytoplasmic. The tract at residues 745 to 764 (AAINEHKNGSGGNNPHQGSL) is disordered.

In terms of assembly, the mature envelope protein (Env) consists of a trimer of SU-TM heterodimers attached by noncovalent interactions or by a labile interchain disulfide bond. Post-translationally, specific enzymatic cleavages in vivo yield mature proteins. Envelope glycoproteins are synthesized as an inactive precursor that is N-glycosylated and processed likely by host cell furin or by a furin-like protease in the Golgi to yield the mature SU and TM proteins. The cleavage site between SU and TM requires the minimal sequence [KR]-X-[KR]-R.

It is found in the virion membrane. The protein localises to the host cell membrane. Its function is as follows. The surface protein (SU) attaches the virus to the host cell by binding to its receptor. This interaction triggers the refolding of the transmembrane protein (TM) and is thought to activate its fusogenic potential by unmasking its fusion peptide. Fusion occurs at the host cell plasma membrane. In terms of biological role, the transmembrane protein (TM) acts as a class I viral fusion protein. Under the current model, the protein has at least 3 conformational states: pre-fusion native state, pre-hairpin intermediate state, and post-fusion hairpin state. During viral and target cell membrane fusion, the coiled coil regions (heptad repeats) assume a trimer-of-hairpins structure, positioning the fusion peptide in close proximity to the C-terminal region of the ectodomain. The formation of this structure appears to drive apposition and subsequent fusion of viral and target cell membranes. Membranes fusion leads to delivery of the nucleocapsid into the cytoplasm. This is Envelope glycoprotein (env) from Equus asinus (Donkey).